Here is a 400-residue protein sequence, read N- to C-terminus: MGFITKAIPLALAAMSVVNGAEILETRAGVQTLADKYIVIMNDGVTEKAFDSHRSWVNRTHRRRLVRRGAKAMGGMKHTYKFPTGMKGYSGHFDEDMINQIAKHSDVKYIERDARVQINAITEQDNVPSWGLARVGSREAGGSTYYYDSTAGEGSTAYIIDTGTDIEHEEFEGRATWGSNFVDDMDMDCNGHGTHVSGTVGGATFGVAKKSNIVAVKVLDCNGSGSNSGVIMGMEWATNDAKKKGADKAVANMSLGGAFSQASNDAAAAIANGGVFLAVAAGNDNVDAANSSPASEPSICTVAASTEQDGKADFSNFGQVVDVYAPGDSITSAKPGGGSQVLSGTSMATPHVAGLAAYFIGLGMPGGPGLCDTIKQKAIDAIANPGAGTTGKLINNGSGK.

The first 20 residues, 1–20 (MGFITKAIPLALAAMSVVNG), serve as a signal peptide directing secretion. Residues 21 to 119 (AEILETRAGV…IERDARVQIN (99 aa)) constitute a propeptide that is removed on maturation. The 83-residue stretch at 36-118 (KYIVIMNDGV…YIERDARVQI (83 aa)) folds into the Inhibitor I9 domain. The region spanning 129–400 (SWGLARVGSR…GKLINNGSGK (272 aa)) is the Peptidase S8 domain. Residues Asp-161 and His-192 each act as charge relay system in the active site. 2 N-linked (GlcNAc...) asparagine glycosylation sites follow: Asn-222 and Asn-252. The active-site Charge relay system is Ser-346. N-linked (GlcNAc...) asparagine glycosylation is present at Asn-396.

Belongs to the peptidase S8 family.

The protein resides in the secreted. In terms of biological role, secreted subtilisin-like serine protease with keratinolytic activity that contributes to pathogenicity. The sequence is that of Subtilisin-like protease 7 (SUB7) from Arthroderma otae (strain ATCC MYA-4605 / CBS 113480) (Microsporum canis).